The chain runs to 75 residues: Small ribosomal subunit protein bS16 (75 aa).

It belongs to the bacterial ribosomal protein bS16 family.

In Nitratiruptor sp. (strain SB155-2), this protein is Small ribosomal subunit protein bS16.